Reading from the N-terminus, the 286-residue chain is ATP synthase gamma chain (286 aa).

The protein belongs to the ATPase gamma chain family. F-type ATPases have 2 components, CF(1) - the catalytic core - and CF(0) - the membrane proton channel. CF(1) has five subunits: alpha(3), beta(3), gamma(1), delta(1), epsilon(1). CF(0) has three main subunits: a, b and c.

It is found in the cell inner membrane. Produces ATP from ADP in the presence of a proton gradient across the membrane. The gamma chain is believed to be important in regulating ATPase activity and the flow of protons through the CF(0) complex. This is ATP synthase gamma chain from Shewanella baltica (strain OS223).